A 457-amino-acid polypeptide reads, in one-letter code: Streptogrisin-C (457 aa).

Residues Met-1–Ala-34 constitute a signal peptide (tat-type signal). A propeptide spanning residues Asp-35–Leu-202 is cleaved from the precursor. The catalytic stretch occupies residues Ala-203–Ser-393. Residues Cys-219 and Cys-239 are joined by a disulfide bond. Residues His-238 and Asp-266 each act as charge relay system in the active site. Disulfide bonds link Cys-305–Cys-315 and Cys-341–Cys-368. Ser-347 (charge relay system) is an active-site residue. A disordered region spans residues Ser-393–Gly-412. The linker stretch occupies residues Gly-394–Thr-413. Over residues Thr-399 to Asp-408 the composition is skewed to pro residues. The Chitin-binding type-3 domain maps to Ala-415–Val-457.

The protein belongs to the peptidase S1 family. In terms of assembly, monomer. Post-translationally, predicted to be exported by the Tat system. The position of the signal peptide cleavage has not been experimentally proven.

Functionally, hydrolysis of proteins with specificity similar to chymotrypsin. May be specialized for the degradation of chitin-linked proteins. Has a primary specificity for large aliphatic or aromatic amino acids. This Streptomyces griseus protein is Streptogrisin-C (sprC).